We begin with the raw amino-acid sequence, 456 residues long: Ribosome assembly protein METTL17, mitochondrial (456 aa).

Residues 1–19 constitute a mitochondrion transit peptide; that stretch reads MAAALKCLLTLGRWCPGLG. The [4Fe-4S] cluster site is built by Cys333, Cys339, Cys347, and Cys404.

Belongs to the methyltransferase superfamily. Rsm22 family. As to quaternary structure, associates with the mitochondrial ribosome (mitoribosome).

It is found in the mitochondrion matrix. Mitochondrial ribosome (mitoribosome) assembly factor. Binds at the interface of the head and body domains of the mitochondrial small ribosomal subunit (mt-SSU), occluding the mRNA channel and preventing compaction of the head domain towards the body. Probable inactive methyltransferase: retains the characteristic folding and ability to bind S-adenosyl-L-methionine, but it probably lost its methyltransferase activity. This Homo sapiens (Human) protein is Ribosome assembly protein METTL17, mitochondrial.